The following is a 422-amino-acid chain: MDSIRIRGGKPLSGKIRISGAKNAALPILCATLLSDGESLLRNVPALRDIETTSALLRFLGRNVETAPPLVKVGAGDNVRPEAPYELVKQMRASVMVLGPLLARFGRAKVSLPGGCQIGTRPVDQHLKGLEALGATIRLSRGYIVAECKRLRGAEVVFDLPTVTGTENLMMAAALAKGRTTLVNCAREPEVEELGRVLNKMGARVSGAGTDVIHIEGADELEPFDHAIISDRIEAGTYMVAAAAAGGDVLIENAPLEDLEAVAAKLRQAGVEVGREGDCVRVRREGRPLRAVDVTTAPHPGFPTDMQAQFMVLMCLAQGTSRIVETIFENRFMHVPELARMGAHIDVDGHTAHVHGGAPLSGATVMATDLRASASLVIAGLVATEGETEVLRVYHLDRGYEFMERKLAQLGADTARVEGRDG.

22 to 23 (KN) serves as a coordination point for phosphoenolpyruvate. Arg92 is a binding site for UDP-N-acetyl-alpha-D-glucosamine. Cys116 serves as the catalytic Proton donor. Cys116 is subject to 2-(S-cysteinyl)pyruvic acid O-phosphothioketal. Residues 121-125 (RPVDQ), Asp305, and Ile327 each bind UDP-N-acetyl-alpha-D-glucosamine.

This sequence belongs to the EPSP synthase family. MurA subfamily.

The protein resides in the cytoplasm. It catalyses the reaction phosphoenolpyruvate + UDP-N-acetyl-alpha-D-glucosamine = UDP-N-acetyl-3-O-(1-carboxyvinyl)-alpha-D-glucosamine + phosphate. The protein operates within cell wall biogenesis; peptidoglycan biosynthesis. Cell wall formation. Adds enolpyruvyl to UDP-N-acetylglucosamine. The sequence is that of UDP-N-acetylglucosamine 1-carboxyvinyltransferase from Sorangium cellulosum (strain So ce56) (Polyangium cellulosum (strain So ce56)).